Here is a 666-residue protein sequence, read N- to C-terminus: ATP-dependent zinc metalloprotease FtsH (666 aa).

The segment at 1–23 (MSREVTSGLPQDKPTGSAPPPPP) is disordered. Residues 1–27 (MSREVTSGLPQDKPTGSAPPPPPPWRR) lie on the Cytoplasmic side of the membrane. A helical membrane pass occupies residues 28–48 (WLLPIGLLVSLVLLFTFPMRP). Residues 49 to 125 (SSGKTLTYSE…RPPGPSLASQ (77 aa)) lie on the Extracellular side of the membrane. Residues 126-146 (VLAGVLSFLPFLLLLGLFAYS) form a helical membrane-spanning segment. At 147 to 666 (GRRAGAGFLA…RTAASSDDLL (520 aa)) the chain is on the cytoplasmic side. 219–226 (GPPGTGKT) contacts ATP. Histidine 442 is a Zn(2+) binding site. Glutamate 443 is an active-site residue. Histidine 446 and aspartate 518 together coordinate Zn(2+). The disordered stretch occupies residues 626–666 (PEEHREAAARHVRRPGIAAATGASMAGGSEPRTAASSDDLL). The segment covering 641 to 653 (GIAAATGASMAGG) has biased composition (low complexity).

This sequence in the central section; belongs to the AAA ATPase family. It in the C-terminal section; belongs to the peptidase M41 family. Homohexamer. Zn(2+) serves as cofactor.

It is found in the cell membrane. Functionally, acts as a processive, ATP-dependent zinc metallopeptidase for both cytoplasmic and membrane proteins. Plays a role in the quality control of integral membrane proteins. In Acidothermus cellulolyticus (strain ATCC 43068 / DSM 8971 / 11B), this protein is ATP-dependent zinc metalloprotease FtsH.